The sequence spans 213 residues: CDP-diacylglycerol--inositol 3-phosphatidyltransferase (213 aa).

Residues 1-5 lie on the Cytoplasmic side of the membrane; that stretch reads MPDEN. Residues 6–26 traverse the membrane as a helical segment; it reads IFLFVPNLIGYARIVFAIISF. Tyr27 is a topological domain (lumenal). The chain crosses the membrane as a helical span at residues 28–48; the sequence is FMPCCPLTASSFYLLSGLLDA. Residues Asp47 and Asp50 each contribute to the Mg(2+) site. The Cytoplasmic segment spans residues 49–73; it reads FDGHAARALNQGTRFGAMLDMLTDR. Positions 51, 55, and 61 each coordinate a CDP-1,2-diacyl-sn-glycerol. The Mg(2+) site is built by Asp68 and Asp72. The active-site Proton acceptor is the Asp72. A helical transmembrane segment spans residues 74–94; it reads CSTMCLLVNLALLYPGATLFF. Gln95 is a topological domain (lumenal). Residues 96–116 traverse the membrane as a helical segment; the sequence is ISMSLDVASHWLHLHSSVVRG. Topologically, residues 117-139 are cytoplasmic; that stretch reads SESHKMIDLSGNPVLRIYYTSRP. A helical membrane pass occupies residues 140-160; it reads ALFTLCAGNELFYCLLYLFHF. At 161 to 174 the chain is on the lumenal side; sequence SEGPLVGSVGLFRM. Residues 175–195 traverse the membrane as a helical segment; that stretch reads GLWVTAPIALLKSLISVIHLI. At 196-213 the chain is on the cytoplasmic side; sequence TAARNMAALDAADRAKKK.

It belongs to the CDP-alcohol phosphatidyltransferase class-I family. Mn(2+) serves as cofactor. It depends on Mg(2+) as a cofactor. Detected in placenta (at protein level). Widely expressed. Higher expression in adult liver and skeletal muscle, slightly lower levels seen in pancreas, kidney, lung, placenta, brain, heart, leukocyte, colon, small intestine, ovary, testis, prostate, thymus and spleen. In fetus, expressed in kidney, liver, lung and brain.

It is found in the endoplasmic reticulum membrane. Its subcellular location is the cell membrane. It carries out the reaction a CDP-1,2-diacyl-sn-glycerol + myo-inositol = a 1,2-diacyl-sn-glycero-3-phospho-(1D-myo-inositol) + CMP + H(+). With respect to regulation, inhibited by PtdIns (product inhibition), phosphatidylinositol phosphate, and nucleoside di- and tri-phosphates. In terms of biological role, catalyzes the biosynthesis of phosphatidylinositol (PtdIns) as well as PtdIns:inositol exchange reaction. May thus act to reduce an excessive cellular PtdIns content. The exchange activity is due to the reverse reaction of PtdIns synthase and is dependent on CMP, which is tightly bound to the enzyme. This is CDP-diacylglycerol--inositol 3-phosphatidyltransferase from Homo sapiens (Human).